A 342-amino-acid chain; its full sequence is Putative glycosyltransferases (342 aa).

The next 2 membrane-spanning stretches (helical) occupy residues 227 to 247 (IFYL…YLII) and 262 to 282 (VIVS…LVGI).

The protein belongs to the glycosyltransferase 2 family.

It localises to the cell membrane. Its function is as follows. May play only a redundant role in maintaining cell wall viability and bacterial virulence. In Mycobacterium tuberculosis (strain CDC 1551 / Oshkosh), this protein is Putative glycosyltransferases (pimF).